The chain runs to 195 residues: ATP-dependent Clp protease proteolytic subunit (195 aa).

Ser-94 acts as the Nucleophile in catalysis. His-119 is a catalytic residue.

This sequence belongs to the peptidase S14 family. As to quaternary structure, component of the chloroplastic Clp protease core complex.

It is found in the plastid. The protein localises to the chloroplast stroma. The catalysed reaction is Hydrolysis of proteins to small peptides in the presence of ATP and magnesium. alpha-casein is the usual test substrate. In the absence of ATP, only oligopeptides shorter than five residues are hydrolyzed (such as succinyl-Leu-Tyr-|-NHMec, and Leu-Tyr-Leu-|-Tyr-Trp, in which cleavage of the -Tyr-|-Leu- and -Tyr-|-Trp bonds also occurs).. Cleaves peptides in various proteins in a process that requires ATP hydrolysis. Has a chymotrypsin-like activity. Plays a major role in the degradation of misfolded proteins. This chain is ATP-dependent Clp protease proteolytic subunit, found in Cycas taitungensis (Prince sago).